We begin with the raw amino-acid sequence, 182 residues long: Early upstream open reading frame (182 aa).

The protein belongs to the EUO family.

The polypeptide is Early upstream open reading frame (Chlamydophila psittaci (strain ATCC VR-125 / 6BC) (Chlamydia psittaci)).